The sequence spans 108 residues: Peptidyl-prolyl cis-trans isomerase FKBP1A (108 aa).

Ser10 bears the Phosphoserine mark. Residues 20 to 108 form the PPIase FKBP-type domain; the sequence is GQTCVVHYTG…VFDVELLKLE (89 aa). An N6-acetyllysine; alternate modification is found at Lys53. At Lys53 the chain carries N6-succinyllysine; alternate.

It belongs to the FKBP-type PPIase family. FKBP1 subfamily. In terms of assembly, interacts with TGFBR1; prevents TGFBR1 phosphorylation by TGFBR2 and stabilizes it in the inactive conformation. Interacts with ACVR1B and SMAD7. Identified in a complex composed of RYR1, PDE4D, PKA, FKBP1A and protein phosphatase 1 (PP1). Interacts directly with RYR2. Interacts directly with RYR3. Interacts directly with RYR1. Interacts with GLMN; rapamycin and FK506 abolish the interaction with GLMN in a dose dependent manner. In terms of tissue distribution, ubiquitous.

The protein resides in the cytoplasm. The protein localises to the cytosol. It localises to the sarcoplasmic reticulum membrane. It carries out the reaction [protein]-peptidylproline (omega=180) = [protein]-peptidylproline (omega=0). Inhibited by both FK506 and rapamycin. In terms of biological role, keeps in an inactive conformation TGFBR1, the TGF-beta type I serine/threonine kinase receptor, preventing TGF-beta receptor activation in absence of ligand. Recruits SMAD7 to ACVR1B which prevents the association of SMAD2 and SMAD3 with the activin receptor complex, thereby blocking the activin signal. May modulate the RYR1 calcium channel activity. PPIases accelerate the folding of proteins. It catalyzes the cis-trans isomerization of proline imidic peptide bonds in oligopeptides. This is Peptidyl-prolyl cis-trans isomerase FKBP1A (Fkbp1a) from Rattus norvegicus (Rat).